The following is a 300-amino-acid chain: F-box protein SKIP1 (300 aa).

In terms of domain architecture, F-box; degenerate spans 11–52 (LAPEILINIISRLTIQELWTGPMFVQKSWLTVCRDPYLWSIF).

As to quaternary structure, part of a SCF (ASK-cullin-F-box) protein ligase complex. Interacts with SKP1A/ASK1 and SKP1B/ASK2.

The protein resides in the nucleus. The protein operates within protein modification; protein ubiquitination. Functionally, component of SCF(ASK-cullin-F-box) E3 ubiquitin ligase complexes, which may mediate the ubiquitination and subsequent proteasomal degradation of target proteins. This chain is F-box protein SKIP1 (SKIP1), found in Arabidopsis thaliana (Mouse-ear cress).